A 111-amino-acid chain; its full sequence is uncharacterized protein (111 aa).

Residues 1–85 (MTGLMKAFQK…TSSREDEQKL (85 aa)) are disordered. Positions 11 to 23 (LSPTKRQYAEITQ) are enriched in polar residues. Low complexity predominate over residues 24–42 (SNSSISSSSSGSKYNDSSS). The segment covering 56-77 (ARASTSTQAQKPASSQQKGGTS) has biased composition (polar residues).

This is an uncharacterized protein from Microplitis demolitor (Parasitoid wasp).